Here is a 115-residue protein sequence, read N- to C-terminus: Large ribosomal subunit protein bL20 (115 aa).

Belongs to the bacterial ribosomal protein bL20 family.

Its function is as follows. Binds directly to 23S ribosomal RNA and is necessary for the in vitro assembly process of the 50S ribosomal subunit. It is not involved in the protein synthesizing functions of that subunit. The protein is Large ribosomal subunit protein bL20 of Bdellovibrio bacteriovorus (strain ATCC 15356 / DSM 50701 / NCIMB 9529 / HD100).